A 147-amino-acid chain; its full sequence is 3-hydroxyacyl-[acyl-carrier-protein] dehydratase FabZ (147 aa).

Residue H50 is part of the active site.

Belongs to the thioester dehydratase family. FabZ subfamily.

The protein localises to the cytoplasm. It catalyses the reaction a (3R)-hydroxyacyl-[ACP] = a (2E)-enoyl-[ACP] + H2O. Involved in unsaturated fatty acids biosynthesis. Catalyzes the dehydration of short chain beta-hydroxyacyl-ACPs and long chain saturated and unsaturated beta-hydroxyacyl-ACPs. This Lactiplantibacillus plantarum (strain ATCC BAA-793 / NCIMB 8826 / WCFS1) (Lactobacillus plantarum) protein is 3-hydroxyacyl-[acyl-carrier-protein] dehydratase FabZ.